The chain runs to 314 residues: Acetaldehyde dehydrogenase 2 (314 aa).

11 to 14 (SGNI) lines the NAD(+) pocket. The active-site Acyl-thioester intermediate is the cysteine 129. NAD(+) is bound by residues 160–168 (SAGPGTRAN) and asparagine 291.

This sequence belongs to the acetaldehyde dehydrogenase family.

The catalysed reaction is acetaldehyde + NAD(+) + CoA = acetyl-CoA + NADH + H(+). This Rhodococcus erythropolis (strain PR4 / NBRC 100887) protein is Acetaldehyde dehydrogenase 2.